The following is a 144-amino-acid chain: Methylglyoxal synthase (144 aa).

The region spanning 1–144 is the MGS-like domain; that stretch reads MKIALIAHDE…KSGEEKETER (144 aa). Residues histidine 8, lysine 12, 34-37, and 54-55 each bind substrate; these read TGTT and SG. Residue aspartate 60 is the Proton donor/acceptor of the active site. Histidine 87 contributes to the substrate binding site.

The protein belongs to the methylglyoxal synthase family.

It carries out the reaction dihydroxyacetone phosphate = methylglyoxal + phosphate. Its function is as follows. Catalyzes the formation of methylglyoxal from dihydroxyacetone phosphate. The sequence is that of Methylglyoxal synthase from Geobacillus thermodenitrificans (strain NG80-2).